Reading from the N-terminus, the 333-residue chain is Probable ABC transporter permease protein y4mJ (333 aa).

The next 10 membrane-spanning stretches (helical) occupy residues 30 to 50 (LAIA…VPQA), 62 to 82 (AGAP…TGGI), 84 to 104 (LSVG…MASG), 110 to 130 (ALIG…LVTV), 133 to 153 (LAPF…AFIV), 175 to 195 (IPGV…IEIF), 228 to 248 (FAYV…ISYI), 253 to 273 (STAG…GGAS), 274 to 294 (LLGG…ITVI), and 300 to 320 (LIGI…LIAV).

This sequence belongs to the binding-protein-dependent transport system permease family. AraH/RbsC subfamily.

Its subcellular location is the cell inner membrane. Probably part of the binding-protein-dependent transport system y4mIJK. This system probably transports a sugar. Probably responsible for the translocation of the substrate across the membrane. The chain is Probable ABC transporter permease protein y4mJ from Sinorhizobium fredii (strain NBRC 101917 / NGR234).